Consider the following 344-residue polypeptide: DNA-directed RNA polymerase subunit alpha (344 aa).

Residues 1–238 (MKVIKTAPLI…KQLGVFGERP (238 aa)) form an alpha N-terminal domain (alpha-NTD) region. Residues 254-344 (AKDLSAKIES…EKLEDKGGND (91 aa)) are alpha C-terminal domain (alpha-CTD).

This sequence belongs to the RNA polymerase alpha chain family. As to quaternary structure, homodimer. The RNAP catalytic core consists of 2 alpha, 1 beta, 1 beta' and 1 omega subunit. When a sigma factor is associated with the core the holoenzyme is formed, which can initiate transcription.

The catalysed reaction is RNA(n) + a ribonucleoside 5'-triphosphate = RNA(n+1) + diphosphate. In terms of biological role, DNA-dependent RNA polymerase catalyzes the transcription of DNA into RNA using the four ribonucleoside triphosphates as substrates. The polypeptide is DNA-directed RNA polymerase subunit alpha (Helicobacter pylori (strain ATCC 700392 / 26695) (Campylobacter pylori)).